Reading from the N-terminus, the 56-residue chain is Large ribosomal subunit protein bL33 (56 aa).

It belongs to the bacterial ribosomal protein bL33 family.

This is Large ribosomal subunit protein bL33 from Ehrlichia ruminantium (strain Gardel).